Reading from the N-terminus, the 627-residue chain is Zinc finger MYM-type protein 5 (627 aa).

Residues 1–23 (MEAHLADMESSGGPTSSLAGTSR) form a disordered region. A compositionally biased stretch (polar residues) spans 12–23 (GGPTSSLAGTSR). A Glycyl lysine isopeptide (Lys-Gly) (interchain with G-Cter in SUMO2) cross-link involves residue Lys-59. Residues 91–123 (DDEGDTDTNGGEEKNPTDFIEWGPNGNKSSTKN) form a disordered region. Residues Lys-137 and Lys-195 each participate in a glycyl lysine isopeptide (Lys-Gly) (interchain with G-Cter in SUMO2) cross-link. An MYM-type 1 zinc finger spans residues 234–268 (HLFCSTTCLSSFSHKRTRKTRNVMCKKDSPVRTTT). An MYM-type 2; degenerate zinc finger spans residues 280-319 (QGFYNASLSPYENCQSLRKEVFTKSRCIICNKLGEVRHEI). 2 consecutive MYM-type zinc fingers follow at residues 326–354 (HKLCSNNCFNEYRLTNGLIMNCCEQCSKY) and 370–396 (KRFCCQNCADEYKEIMEAKSKLLLLQN). The interval 405-429 (ENEKRLRESSGTLSGNTGDIPEKKE) is disordered. Residues Lys-408, Lys-427, and Lys-517 each participate in a glycyl lysine isopeptide (Lys-Gly) (interchain with G-Cter in SUMO2) cross-link.

In terms of assembly, interacts (via N-terminal 120 amino acid region) with ETV5 (via C-terminal).

The protein resides in the nucleus. In terms of biological role, functions as a transcriptional regulator. This is Zinc finger MYM-type protein 5 (Zmym5) from Mus musculus (Mouse).